A 402-amino-acid polypeptide reads, in one-letter code: D-galactonate dehydratase family member RspA (402 aa).

Positions 37 and 122 each coordinate substrate. The active-site Proton donor/acceptor is the Y159. D210 is a Mg(2+) binding site. H212 acts as the Proton donor/acceptor in catalysis. Mg(2+) is bound by residues E236 and E262. Substrate is bound by residues E262, R283, H312, D316, and E339.

Belongs to the mandelate racemase/muconate lactonizing enzyme family. GalD subfamily. The cofactor is Mg(2+).

The catalysed reaction is D-mannonate = 2-dehydro-3-deoxy-D-gluconate + H2O. In terms of biological role, has low D-mannonate dehydratase activity (in vitro), suggesting that this is not a physiological substrate and that it has no significant role in D-mannonate degradation in vivo. Has no detectable activity with a panel of 70 other acid sugars (in vitro). This Cellvibrio japonicus (strain Ueda107) (Pseudomonas fluorescens subsp. cellulosa) protein is D-galactonate dehydratase family member RspA (rspA).